Reading from the N-terminus, the 363-residue chain is Dihydroorotate dehydrogenase (quinone) (363 aa).

Residues 67-71 (AGFDK) and Thr-91 contribute to the FMN site. Substrate is bound at residue Lys-71. Residue 116–120 (NRMGF) participates in substrate binding. FMN contacts are provided by Asn-156 and Asn-189. Asn-189 is a binding site for substrate. Residue Ser-192 is the Nucleophile of the active site. Position 194 (Asn-194) interacts with substrate. FMN is bound by residues Lys-231 and Thr-259. 260 to 261 (NT) contacts substrate. FMN contacts are provided by residues Gly-287, Gly-316, and 337 to 338 (YT).

The protein belongs to the dihydroorotate dehydrogenase family. Type 2 subfamily. Monomer. The cofactor is FMN.

It is found in the cell membrane. It carries out the reaction (S)-dihydroorotate + a quinone = orotate + a quinol. It functions in the pathway pyrimidine metabolism; UMP biosynthesis via de novo pathway; orotate from (S)-dihydroorotate (quinone route): step 1/1. Its function is as follows. Catalyzes the conversion of dihydroorotate to orotate with quinone as electron acceptor. The polypeptide is Dihydroorotate dehydrogenase (quinone) (Kocuria rhizophila (strain ATCC 9341 / DSM 348 / NBRC 103217 / DC2201)).